The sequence spans 300 residues: Protoheme IX farnesyltransferase (300 aa).

9 consecutive transmembrane segments (helical) span residues 24 to 44 (VTQL…PGMV), 48 to 68 (VLIG…AINC), 94 to 114 (PQIL…LYTF), 118 to 138 (LTMW…TLLL), 146 to 166 (IVIG…AVTG), 172 to 192 (AWIL…VLAL), 217 to 237 (LHIL…FISG), 239 to 259 (SGAV…AYAW), and 278 to 298 (IVYL…RPLL).

The protein belongs to the UbiA prenyltransferase family. Protoheme IX farnesyltransferase subfamily.

Its subcellular location is the cell inner membrane. The catalysed reaction is heme b + (2E,6E)-farnesyl diphosphate + H2O = Fe(II)-heme o + diphosphate. It participates in porphyrin-containing compound metabolism; heme O biosynthesis; heme O from protoheme: step 1/1. Converts heme B (protoheme IX) to heme O by substitution of the vinyl group on carbon 2 of heme B porphyrin ring with a hydroxyethyl farnesyl side group. This chain is Protoheme IX farnesyltransferase, found in Burkholderia vietnamiensis (strain G4 / LMG 22486) (Burkholderia cepacia (strain R1808)).